The sequence spans 316 residues: Olfactory receptor 52A5 (316 aa).

Residues 1–27 (MPTFNGSVFMPSAFILIGIPGLESVQC) lie on the Extracellular side of the membrane. N-linked (GlcNAc...) asparagine glycosylation is present at asparagine 5. The helical transmembrane segment at 28-48 (WIGIPFSAMYLIGVIGNSLIL) threads the bilayer. Residues 49-56 (VIIKYENS) lie on the Cytoplasmic side of the membrane. Residues 57 to 77 (LHIPMYIFLAMLAATDIALNT) form a helical membrane-spanning segment. At 78 to 101 (CILPKMLGIFWFHLPEISFDACLF) the chain is on the extracellular side. Residues 102 to 122 (QMWLIHSFQAIESGILLAMAL) traverse the membrane as a helical segment. At 123–141 (DRYVAICIPLRHATIFSQQ) the chain is on the cytoplasmic side. The chain crosses the membrane as a helical span at residues 142–162 (FLTHIGLGVTLRAAILIIPSL). The Extracellular portion of the chain corresponds to 163-199 (GLIKCCLKHYRTTVISHSYCEHMAIVKLATEDIRVNK). A helical transmembrane segment spans residues 200-220 (IYGLFVAFAILGFDIIFITLS). Over 221–240 (YVQIFITVFQLPQKEARFKA) the chain is Cytoplasmic. Residues 241–261 (FNTCIAHICVFLQFYLLAFFS) form a helical membrane-spanning segment. Residues 262–276 (FFTHRFGSHIPPYIH) are Extracellular-facing. The chain crosses the membrane as a helical span at residues 277-297 (ILLSNLYLLVPPFLNPIVYGV). Residues 298–316 (KTKQIRDHIVKVFFFKKVT) are Cytoplasmic-facing.

It belongs to the G-protein coupled receptor 1 family.

It is found in the cell membrane. Its function is as follows. Odorant receptor. This chain is Olfactory receptor 52A5 (OR52A5), found in Homo sapiens (Human).